The following is a 164-amino-acid chain: Small ribosomal subunit protein uS5 (164 aa).

The S5 DRBM domain maps to 10–73 (LEERVVAINR…EAAKKNLIEV (64 aa)).

It belongs to the universal ribosomal protein uS5 family. In terms of assembly, part of the 30S ribosomal subunit. Contacts proteins S4 and S8.

Functionally, with S4 and S12 plays an important role in translational accuracy. In terms of biological role, located at the back of the 30S subunit body where it stabilizes the conformation of the head with respect to the body. The polypeptide is Small ribosomal subunit protein uS5 (Streptococcus thermophilus (strain CNRZ 1066)).